Consider the following 227-residue polypeptide: Thymidine kinase (227 aa).

Residues 15 to 22 and 87 to 90 contribute to the ATP site; these read GSMFSGKT and DEAQ. Glutamate 88 serves as the catalytic Proton acceptor. Zn(2+) contacts are provided by cysteine 144, cysteine 147, cysteine 176, and cysteine 179. The disordered stretch occupies residues 198–227; that stretch reads RAVATDDADASTNEADPEAADAASADGTAA. Residues 217–227 are compositionally biased toward low complexity; it reads ADAASADGTAA.

It belongs to the thymidine kinase family. In terms of assembly, homotetramer.

Its subcellular location is the cytoplasm. It catalyses the reaction thymidine + ATP = dTMP + ADP + H(+). In Salinibacter ruber (strain DSM 13855 / M31), this protein is Thymidine kinase.